The primary structure comprises 1135 residues: Vinculin (1135 aa).

Positions 2–835 (PVFHTRTIES…GAVAKVREAF (834 aa)) are N-terminal globular head. Y100 bears the Phosphotyrosine mark. The tract at residues 168-208 (MTKMAKMIDERQQELTHQEHRVMLVNSMNTVKELLPVLISA) is talin-interaction. 3 repeat units span residues 259–369 (ASKD…KVEN), 370–479 (AARK…KTNR), and 480–589 (AVAN…RMQE). A 3 X 112 AA tandem repeats region spans residues 259 to 589 (ASKDTEAMKR…LKDLKARMQE (331 aa)). Phosphotyrosine occurs at positions 537 and 822. Residues 836 to 878 (QPQEPDFPPPPPDLEHLHLTDELAPPKPPLPEGEVPPPRPPPP) are linker (Pro-rich). Residues 837-888 (PQEPDFPPPPPDLEHLHLTDELAPPKPPLPEGEVPPPRPPPPEEKDEEFPEQ) are disordered. The span at 860 to 876 (PPKPPLPEGEVPPPRPP) shows a compositional bias: pro residues. The interval 879–1135 (EEKDEEFPEQ…RWVRKTPWYQ (257 aa)) is C-terminal tail. Facilitates phospholipid membrane insertion stretches follow at residues 1004–1047 (RLVR…KRIR) and 1121–1135 (AGFT…PWYQ). Phosphotyrosine; by SRC-type Tyr-kinases is present on Y1134.

This sequence belongs to the vinculin/alpha-catenin family. Exhibits self-association properties. Interacts with APBB1IP, NRAP and TLN1. Interacts with CTNNB1 and this interaction is necessary for its localization to the cell-cell junctions and for its function in regulating cell surface expression of E-cadherin. In terms of processing, phosphorylated; on serines, threonines and tyrosines. Phosphorylation on Tyr-1134 in activated platelets affects head-tail interactions and cell spreading but has no effect on actin binding nor on localization to focal adhesion plaques. Acetylated; mainly by myristic acid but also by a small amount of palmitic acid. Isoform Metavinculin is muscle-specific.

It localises to the cell membrane. The protein resides in the cell junction. Its subcellular location is the adherens junction. The protein localises to the focal adhesion. It is found in the cytoplasm. It localises to the cytoskeleton. The protein resides in the sarcolemma. Its subcellular location is the cell projection. The protein localises to the podosome. Its function is as follows. Actin filament (F-actin)-binding protein involved in cell-matrix adhesion and cell-cell adhesion. Regulates cell-surface E-cadherin expression and potentiates mechanosensing by the E-cadherin complex. May also play important roles in cell morphology and locomotion. The polypeptide is Vinculin (VCL) (Gallus gallus (Chicken)).